A 1340-amino-acid chain; its full sequence is Early transcription factor large subunit homolog (1340 aa).

Belongs to the asfivirus G1340L family.

The protein resides in the virion. In terms of biological role, putative initation factor. This African swine fever virus (isolate Tick/South Africa/Pretoriuskop Pr4/1996) (ASFV) protein is Early transcription factor large subunit homolog.